The chain runs to 507 residues: Maturase K (507 aa).

It belongs to the intron maturase 2 family. MatK subfamily.

It localises to the plastid. The protein localises to the chloroplast. Usually encoded in the trnK tRNA gene intron. Probably assists in splicing its own and other chloroplast group II introns. The polypeptide is Maturase K (Lens ervoides (Beaded lentil)).